Reading from the N-terminus, the 58-residue chain is Large ribosomal subunit protein bL32 (58 aa).

It belongs to the bacterial ribosomal protein bL32 family.

The polypeptide is Large ribosomal subunit protein bL32 (Anaplasma phagocytophilum (strain HZ)).